The sequence spans 1151 residues: MNTPAYAEIGITTNFSFLRGGSDPRAYVHQASILGISAIGIADHNTLAGVVRAYKELDNDKVLHKPKLLIGARIVFIDGTPDILVYPRDRAAYGRLCQLLTRGKRGDDVTRIEKGECRLTFSDLLAFSEGQLLVLTLPHRFEPAQALDVLAKLKATRAEGVWLAASLVHRGDDRRRLARLDDLATTAKVQLLATNEVLYHDPARRPLQDVLTCIREKTTIEAVGRKLEANAERFLKTPREMSRLFRDFPDAIAETMRFANKIDFSLDQLRYQYPDEPVPPGKTAQGHLEDLTWAGVDKYFAGKIDDKLRATLKKELALIAELKYAHYFLTVHDIVHYARSQNILCQGRGSAANSAVCYVLGITSVDPTKVDLLFERFISKERLEPPDIDVDFEHSRREEVMQYVYRRYGRHRAAIIATIIHYRPRSAIRDVGKALGLTEDVTAALADTVWGSWGSGLNDMQVKQAGLDPQNPMINLAVELATELIEFPRHLSQHVGGYVLTQDRLDTYVPIGNAAMDDRTFIEWDKDDVDALNMMKVDVLALGMLTCIRKCFDLIDQHKGERWVLASVPQDDPKVYDMLCDGESLGVFQVESRAQMNMLPRLKPRTFYDLVIEVAIVRPGPIQGDMVHPYLRRRNGQEKVNYPSPSPEHGPADELYKVLHKTKGVPLFQEQAMRIAIEAAKFTSEEANGLRRSMATFRNVGTIGKYEDKLIGNMVARGYDPNFARSCFDQIKGFGSYGFPESHAASFAQLVYISSWLKYHHPDAFCCGLLNSQPMGFYAPAQIVGDARKNGVEVRDIDVSYSFAQNTLEQGSGKYCAVRLGFRQIDGFHWLDEDEEHLKRSLLSFRGAPLGANPESIGPHMPGGMDSGLDAGASPRNDKKEDWANRIVAARNRRPFTSLEDFARDTGLPKRALILLADADAFRSLGLDRREALWQVRRLPDDVPLPLFEAATAREQPDEHAKPLPLMPRPEQVVADYQTIRLSLKGHPMEFLREMLSRERVVACKDVNHQNERRRVRCAGVVLVRQRPGSASGVVFMTLEDETGIANVVVWPKIMEQYRKEVMGARLILVEGYIQSSPEKVTHLIAQRMVDRSHDLIGLANDSLTRKHPVPSGDALIEPLNDDRRDHADAPAQKIRHPRNVRILPPSRDFH.

The interval 1108–1151 is disordered; the sequence is HPVPSGDALIEPLNDDRRDHADAPAQKIRHPRNVRILPPSRDFH.

This sequence belongs to the DNA polymerase type-C family. DnaE2 subfamily.

It is found in the cytoplasm. The enzyme catalyses DNA(n) + a 2'-deoxyribonucleoside 5'-triphosphate = DNA(n+1) + diphosphate. Its function is as follows. DNA polymerase involved in damage-induced mutagenesis and translesion synthesis (TLS). It is not the major replicative DNA polymerase. The chain is Error-prone DNA polymerase from Bradyrhizobium diazoefficiens (strain JCM 10833 / BCRC 13528 / IAM 13628 / NBRC 14792 / USDA 110).